We begin with the raw amino-acid sequence, 264 residues long: Sororin (264 aa).

The disordered stretch occupies residues 1 to 45; that stretch reads MAERRTRSGGAAQRSGPRTSLTKPSKSSKRKSGSDLPNSFSEIWP. 5 positions are modified to phosphoserine: serine 20, serine 32, serine 34, serine 78, and serine 82. The KEN box motif lies at 87–89; the sequence is KEN. Phosphothreonine is present on threonine 97. Phosphoserine is present on serine 106. Threonine 110, threonine 114, and threonine 159 each carry phosphothreonine. Residues 166–168 carry the FGF motif motif; that stretch reads FGF. Serine 222 is modified (phosphoserine). The tract at residues 242 to 264 is C-terminal Sororin domain; the sequence is LDKWAVAMNAEFEAAEQFELLIE.

The protein belongs to the sororin family. As to quaternary structure, interacts with the APC/C complex. Interacts with the chromatin-bound cohesin complex; the interaction is indirect, occurs after DNA replication and requires acetylation of the cohesin component SMC3. Interacts (via the FGF motif) with PDS5A and PDS5B; the interaction is direct and prevents the interaction of PDS5A with WAPL. Phosphorylated. Phosphorylation, as cells enter mitosis, disrupts the interaction with PDS5A and relieves the inhibition of WAPL by CDCA5. In terms of processing, ubiquitinated by the APC/C complex in G1, leading to its degradation.

The protein resides in the nucleus. It localises to the chromosome. Its subcellular location is the cytoplasm. Its function is as follows. Regulator of sister chromatid cohesion in mitosis stabilizing cohesin complex association with chromatin. May antagonize the action of WAPL which stimulates cohesin dissociation from chromatin. Cohesion ensures that chromosome partitioning is accurate in both meiotic and mitotic cells and plays an important role in DNA repair. Required for efficient DNA double-stranded break repair. The protein is Sororin (Cdca5) of Mus musculus (Mouse).